The sequence spans 305 residues: Aurasperone B biosynthesis cluster protein A (305 aa).

The signal sequence occupies residues 1-26 (MSIFFSIRFWPAAISAAILWLPQVLG). Asparagine 29, asparagine 34, asparagine 64, asparagine 83, asparagine 132, asparagine 183, asparagine 218, and asparagine 288 each carry an N-linked (GlcNAc...) asparagine glycan.

The protein belongs to the bfoA family.

Part of the gene cluster that mediates the biosynthesis of aurasperone B, a dimeric gamma-naphthopyrone. The first step in the biosynthesis of aurasperone B is the production of gamma-naphthopyrone precursor YWA1 by the non-reducing polyketide synthase albA, via condensation of one acetyl-CoA starter unit with 6 malonyl-CoA units. YWA1 is then methylated by aunE at position C-6 to yield foncesin which is further methylated at position C-8 by aunD to produce fonsecin B. A key enzyme in the biosynthetic pathway is the cytochrome P450 monooxygenase aunB which catalyzes the oxidative dimerization of fonsecin B to aurasperone B. AunB also catalyzes the oxidative dimerization of rubrofusarin B into aurasperone A. This chain is Aurasperone B biosynthesis cluster protein A, found in Aspergillus niger (strain ATCC 1015 / CBS 113.46 / FGSC A1144 / LSHB Ac4 / NCTC 3858a / NRRL 328 / USDA 3528.7).